Reading from the N-terminus, the 471-residue chain is MDSSDIQRTSIAVIGGGLVGSLNACFLAKRNFQVDVYESREDIRMAEFARGRSINLALSYRGRQALKAIGLEDQIVSQGIPMRARMIHSLSGKKSAIPYGTKSQYILSISRENLNKDLLTAVEKYPNAKVHFGHQLLKCRPETGVITLLGPDKVPKDIACDLILGCDGAYSTVRTHLVKKPRFDYSQQYIPHGYMELTIPPQNGDFAMEPNYLHIWPRDTFMMIALPNMNKSFTCTLFMPFEEFEKLLTSRDVLDFFQKYFPDSLHLIGKEALAQDFFRLPAQPMISVKCSSFHFNSHCVLMGDAAHALVPFFGQGMNAGFEDCLVFDELMDKFNNDFSMCLPEFSKFRIPDDHAISDLSMYNYIEMRSHVNSRWFIFQKNIERCLHTLMPSTFIPLYTMVTFSRIRYHEAMLRWQWQKKVINTALFFFGTLVALSTTYLLTGPTFRSSLGCLRRSWNSVTYFQNIGRISL.

FAD-binding positions include Val-19, 37–40, and Ala-57; that span reads YESR. L-kynurenine is bound by residues Arg-85 and Tyr-99. FAD contacts are provided by residues Arg-111, Leu-136, Thr-172, Asp-304, and 317–318; that span reads MN. 2 residues coordinate L-kynurenine: Asn-363 and Tyr-398. Helical transmembrane passes span 385 to 404 and 425 to 445; these read CLHT…VTFS and ALFF…TGPT.

It belongs to the aromatic-ring hydroxylase family. KMO subfamily. FAD is required as a cofactor.

It localises to the mitochondrion outer membrane. It catalyses the reaction L-kynurenine + NADPH + O2 + H(+) = 3-hydroxy-L-kynurenine + NADP(+) + H2O. It participates in cofactor biosynthesis; NAD(+) biosynthesis; quinolinate from L-kynurenine: step 1/3. Catalyzes the hydroxylation of L-kynurenine (L-Kyn) to form 3-hydroxy-L-kynurenine (L-3OHKyn). Required for synthesis of quinolinic acid, a neurotoxic NMDA receptor antagonist and potential endogenous inhibitor of NMDA receptor signaling in axonal targeting, synaptogenesis and apoptosis during brain development. Quinolinic acid may also affect NMDA receptor signaling in pancreatic beta cells, osteoblasts, myocardial cells, and the gastrointestinal tract. This chain is Kynurenine 3-monooxygenase, found in Sus scrofa (Pig).